The sequence spans 642 residues: Mediator of RNA polymerase II transcription subunit 17 (642 aa).

Residues 210–232 (AEETGDEDTASSSNSSSSVSGNN) form a disordered region. Low complexity predominate over residues 220–232 (SSSNSSSSVSGNN).

Belongs to the Mediator complex subunit 17 family. As to quaternary structure, component of the Mediator complex, which includes at least CDK8, MED4, MED6, MED11, MED14, MED17, MED18, MED20, MED21, MED22, MED27, MED28, MED30 and MED31. Interacts with Hsf.

The protein localises to the nucleus. Its subcellular location is the chromosome. Functionally, component of the Mediator complex, a coactivator involved in the regulated transcription of nearly all RNA polymerase II-dependent genes. Mediator functions as a bridge to convey information from gene-specific regulatory proteins to the basal RNA polymerase II transcription machinery. Mediator is recruited to promoters by direct interactions with regulatory proteins and serves as a scaffold for the assembly of a functional preinitiation complex with RNA polymerase II and the general transcription factors. Required for activated transcription of the MtnA, MtnB and MtnD genes. Negatively regulates sex comb development. In Drosophila melanogaster (Fruit fly), this protein is Mediator of RNA polymerase II transcription subunit 17 (MED17).